We begin with the raw amino-acid sequence, 148 residues long: Endoribonuclease YbeY (148 aa).

Residues H113, H117, and H123 each contribute to the Zn(2+) site.

The protein belongs to the endoribonuclease YbeY family. It depends on Zn(2+) as a cofactor.

The protein resides in the cytoplasm. Single strand-specific metallo-endoribonuclease involved in late-stage 70S ribosome quality control and in maturation of the 3' terminus of the 16S rRNA. This chain is Endoribonuclease YbeY, found in Borrelia duttonii (strain Ly).